The chain runs to 260 residues: Type III pantothenate kinase (260 aa).

6–13 provides a ligand contact to ATP; sequence DAGNTRTK. Residues Tyr88 and 95–98 each bind substrate; that span reads GVDR. The active-site Proton acceptor is Asp97. An ATP-binding site is contributed by Ser121. Thr184 is a binding site for substrate.

It belongs to the type III pantothenate kinase family. As to quaternary structure, homodimer. It depends on NH4(+) as a cofactor. K(+) serves as cofactor.

It localises to the cytoplasm. It catalyses the reaction (R)-pantothenate + ATP = (R)-4'-phosphopantothenate + ADP + H(+). The protein operates within cofactor biosynthesis; coenzyme A biosynthesis; CoA from (R)-pantothenate: step 1/5. Functionally, catalyzes the phosphorylation of pantothenate (Pan), the first step in CoA biosynthesis. The protein is Type III pantothenate kinase of Saccharophagus degradans (strain 2-40 / ATCC 43961 / DSM 17024).